The chain runs to 404 residues: Dihydrolipoyllysine-residue acetyltransferase component of pyruvate dehydrogenase complex (404 aa).

In terms of domain architecture, Lipoyl-binding spans 2-78 (PIKILMPALS…PVNSLIAVLS (77 aa)). Residue Lys43 is modified to N6-lipoyllysine. Positions 128 to 165 (FASPLAKRLAKIRNIRLESVQGSGPHGRIVKQDILSYS) constitute a Peripheral subunit-binding (PSBD) domain. The active site involves His377.

It belongs to the 2-oxoacid dehydrogenase family. As to quaternary structure, forms a 24-polypeptide structural core with octahedral symmetry. The cofactor is (R)-lipoate.

The enzyme catalyses N(6)-[(R)-dihydrolipoyl]-L-lysyl-[protein] + acetyl-CoA = N(6)-[(R)-S(8)-acetyldihydrolipoyl]-L-lysyl-[protein] + CoA. Functionally, the pyruvate dehydrogenase complex catalyzes the overall conversion of pyruvate to acetyl-CoA and CO(2). It contains multiple copies of three enzymatic components: pyruvate dehydrogenase (E1), dihydrolipoamide acetyltransferase (E2) and lipoamide dehydrogenase (E3). This chain is Dihydrolipoyllysine-residue acetyltransferase component of pyruvate dehydrogenase complex (pdhC), found in Rickettsia typhi (strain ATCC VR-144 / Wilmington).